The sequence spans 507 residues: ATP synthase subunit alpha (507 aa).

169–176 contributes to the ATP binding site; it reads GDRQTGKT.

Belongs to the ATPase alpha/beta chains family. As to quaternary structure, F-type ATPases have 2 components, CF(1) - the catalytic core - and CF(0) - the membrane proton channel. CF(1) has five subunits: alpha(3), beta(3), gamma(1), delta(1), epsilon(1). CF(0) has three main subunits: a(1), b(2) and c(9-12). The alpha and beta chains form an alternating ring which encloses part of the gamma chain. CF(1) is attached to CF(0) by a central stalk formed by the gamma and epsilon chains, while a peripheral stalk is formed by the delta and b chains.

It localises to the cell inner membrane. It carries out the reaction ATP + H2O + 4 H(+)(in) = ADP + phosphate + 5 H(+)(out). Produces ATP from ADP in the presence of a proton gradient across the membrane. The alpha chain is a regulatory subunit. This is ATP synthase subunit alpha from Magnetococcus marinus (strain ATCC BAA-1437 / JCM 17883 / MC-1).